Reading from the N-terminus, the 553-residue chain is MDIKRTILWVIFSLSVVLLFDNWQRANGHQSMFFPTPQTVTTTAAAPGGTPAGDVPKAAAPAAAGSQAAPATGAVSQTPASEKIVVTTDVIRATVDTAGAIVTKLELLTQKDHDGNPMVLFDRSLERTYLARSGLIGGDFPNHTTVFTASAGPRDLGTGGEVSLTLTADKGGAKLAKTYVFKRGSYVIDTRFDVTNDGAAPINPTLYMELARDGGAVEQSRFYSTFTGPAVYTDTDHYHKITFADIDKSKAHVPAPTDSGWVAMVQHYFASAWIPAASAKREFYVDRIDTNFYRVGMQQALGTVAPGASVSATARLFAGPQEERMLEGITPGLELVKDYGWLTIIAKPLFWLLEKIHKLLGNWGWSIVALTVLVKLVFFPLSATSYRSMAKMKDLQPRMTAIRERHKGDPQKMNQEMMTLYRTEKVNPLGGCLPIVIQIPVFIALYWVLLSSVEMRGAPWLGWVHDLASPDPFYILPILMAVSMFVQTRLNPTPPDPVQAKMMMFMPIAFSVMFFFFPAGLVLYWVVNNCLSIAQQWSINRMLGTNKKAAAAK.

A helical transmembrane segment spans residues 3 to 23 (IKRTILWVIFSLSVVLLFDNW). The interval 44–64 (AAAPGGTPAGDVPKAAAPAAA) is disordered. The next 4 membrane-spanning stretches (helical) occupy residues 359–379 (LLGNWGWSIVALTVLVKLVFF), 429–449 (LGGCLPIVIQIPVFIALYWVL), 467–487 (LASPDPFYILPILMAVSMFVQ), and 507–527 (PIAFSVMFFFFPAGLVLYWVV).

Belongs to the OXA1/ALB3/YidC family. Type 1 subfamily. In terms of assembly, interacts with the Sec translocase complex via SecD. Specifically interacts with transmembrane segments of nascent integral membrane proteins during membrane integration.

It is found in the cell inner membrane. Functionally, required for the insertion and/or proper folding and/or complex formation of integral membrane proteins into the membrane. Involved in integration of membrane proteins that insert both dependently and independently of the Sec translocase complex, as well as at least some lipoproteins. Aids folding of multispanning membrane proteins. The sequence is that of Membrane protein insertase YidC from Ralstonia nicotianae (strain ATCC BAA-1114 / GMI1000) (Ralstonia solanacearum).